Here is a 635-residue protein sequence, read N- to C-terminus: Protein MICRORCHIDIA 1 (635 aa).

Residues 491-511 (RTVIPDQPPTVNTYNPSPLPS) form a disordered region. Residues 588-635 (MRCEEYVKKENEVEQTVKSLEKELEEIKSKCAQLALLVDAKKKEMQQV) are a coiled coil.

This sequence belongs to the MORC ATPase protein family. As to quaternary structure, homodimer and heterodimer with MORC6. Component of an RNA-directed DNA methylation (RdDM) complex that contains at least MORC6, MORC1/CRT1, MORC2, SWI3D and SUVH9. Binds directly to SUVH2 and SUVH9. Interacts with the resistance proteins RCY1, RPM1, SNC1, RPP8, SSI4 and RPS2. The interactions with various resistance proteins are disrupted when these resistance proteins are activated. Interacts with the PAMP recognition receptor FLS2. Mg(2+) serves as cofactor. Requires Mn(2+) as cofactor. As to expression, expressed constitutively.

The protein resides in the nucleus. The protein localises to the endosome. Mediator of defense signaling triggered by distinct classes of R proteins. Required during hypersensitive response (HR) that confers disease resistance to turnip crinkle virus (TCV). Exhibits ATPase activity. Contributes to resistance against Pseudomonas syringae and Hyaloperonospora arabidopsidis, at early stages prior to cytosolic calcium ions Ca(2+) accumulation. Required for pathogen-associated molecular pattern (PAMP)-triggered immunity (PTI), basal resistance, non-host resistance and systemic acquired resistance (SAR). Binds DNA/RNA in a non-specific manner and exhibits endonuclease activity. Probably involved in DNA repair. Required for both RPP8- and SSI4-mediated resistance responses, thus being involved in both TIR- and CC-NB-LRR pathways. Involved in RNA-directed DNA methylation (RdDM) as a component of the RdDM machinery and required for gene silencing. May also be involved in the regulation of chromatin architecture to maintain gene silencing. The chain is Protein MICRORCHIDIA 1 from Arabidopsis thaliana (Mouse-ear cress).